The primary structure comprises 282 residues: Phosphatidylglycerol--prolipoprotein diacylglyceryl transferase (282 aa).

Helical transmembrane passes span Ile23 to Trp43, Phe71 to Tyr91, Ile106 to Ile126, and Gly132 to Phe152. A 1,2-diacyl-sn-glycero-3-phospho-(1'-sn-glycerol) is bound at residue Arg154. 3 helical membrane passes run Leu189 to Gly209, Gly217 to Phe237, and Trp252 to Leu272.

The protein belongs to the Lgt family.

It localises to the cell inner membrane. It catalyses the reaction L-cysteinyl-[prolipoprotein] + a 1,2-diacyl-sn-glycero-3-phospho-(1'-sn-glycerol) = an S-1,2-diacyl-sn-glyceryl-L-cysteinyl-[prolipoprotein] + sn-glycerol 1-phosphate + H(+). It functions in the pathway protein modification; lipoprotein biosynthesis (diacylglyceryl transfer). Functionally, catalyzes the transfer of the diacylglyceryl group from phosphatidylglycerol to the sulfhydryl group of the N-terminal cysteine of a prolipoprotein, the first step in the formation of mature lipoproteins. The sequence is that of Phosphatidylglycerol--prolipoprotein diacylglyceryl transferase from Rhizobium leguminosarum bv. trifolii (strain WSM2304).